The primary structure comprises 418 residues: Synaptotagmin-15 (418 aa).

Residues 1 to 4 lie on the Extracellular side of the membrane; that stretch reads MAEQ. Residues 5 to 27 traverse the membrane as a helical; Signal-anchor for type III membrane protein segment; the sequence is LAFLIGGIIGGLLLLIGVSCCLW. Residues 28 to 418 lie on the Cytoplasmic side of the membrane; it reads RRFCATFTYE…WHALCRPTEP (391 aa). C2 domains follow at residues 144–261 and 275–396; these read CLGR…HRII and EFGD…EHWG.

It belongs to the synaptotagmin family. In terms of assembly, homodimer. As to expression, isoform 1 and isoform 2 are expressed in heart, lung, skeletal muscle and testis; not detected in brain, liver and kidney. Isoform 1 is expressed in spleen.

Its subcellular location is the membrane. May be involved in the trafficking and exocytosis of secretory vesicles in non-neuronal tissues. This Mus musculus (Mouse) protein is Synaptotagmin-15 (Syt15).